Consider the following 368-residue polypeptide: Quinolinate synthase (368 aa).

His-46 and Ser-63 together coordinate iminosuccinate. Cys-110 contacts [4Fe-4S] cluster. Iminosuccinate is bound by residues Tyr-141–Asn-143 and Ser-162. [4Fe-4S] cluster is bound at residue Cys-230. Residues His-256–Glu-258 and Thr-273 each bind iminosuccinate. Cys-320 serves as a coordination point for [4Fe-4S] cluster.

Belongs to the quinolinate synthase family. Type 3 subfamily. [4Fe-4S] cluster serves as cofactor.

It localises to the cytoplasm. The enzyme catalyses iminosuccinate + dihydroxyacetone phosphate = quinolinate + phosphate + 2 H2O + H(+). The protein operates within cofactor biosynthesis; NAD(+) biosynthesis; quinolinate from iminoaspartate: step 1/1. Catalyzes the condensation of iminoaspartate with dihydroxyacetone phosphate to form quinolinate. This chain is Quinolinate synthase, found in Bacillus cereus (strain Q1).